A 199-amino-acid chain; its full sequence is dITP/XTP pyrophosphatase (199 aa).

9-14 provides a ligand contact to substrate; the sequence is TGNKGK. The Mg(2+) site is built by glutamate 41 and aspartate 70. Aspartate 70 acts as the Proton acceptor in catalysis. Residues serine 71, 157-160, lysine 180, and 185-186 each bind substrate; these read FGYD and HR.

The protein belongs to the HAM1 NTPase family. Homodimer. Mg(2+) is required as a cofactor.

The enzyme catalyses XTP + H2O = XMP + diphosphate + H(+). The catalysed reaction is dITP + H2O = dIMP + diphosphate + H(+). It carries out the reaction ITP + H2O = IMP + diphosphate + H(+). Its function is as follows. Pyrophosphatase that catalyzes the hydrolysis of nucleoside triphosphates to their monophosphate derivatives, with a high preference for the non-canonical purine nucleotides XTP (xanthosine triphosphate), dITP (deoxyinosine triphosphate) and ITP. Seems to function as a house-cleaning enzyme that removes non-canonical purine nucleotides from the nucleotide pool, thus preventing their incorporation into DNA/RNA and avoiding chromosomal lesions. In Mannheimia succiniciproducens (strain KCTC 0769BP / MBEL55E), this protein is dITP/XTP pyrophosphatase.